A 678-amino-acid chain; its full sequence is uncharacterized protein (678 aa).

2 consecutive transmembrane segments (helical) span residues 14–34 and 180–200; these read LMFA…WTGL and GAVI…IGGF.

The protein belongs to the mycobacterial PPE family.

Its subcellular location is the cell membrane. This is an uncharacterized protein from Mycobacterium tuberculosis (strain CDC 1551 / Oshkosh).